The following is a 223-amino-acid chain: Killer cell lectin-like receptor subfamily B member 1B allele B (223 aa).

Residues 1–45 (MDTAVVYADLHLARTGEPKHKSPPSLSPDTCQCPRWHRLALKLGC) are Cytoplasmic-facing. The ITIM motif motif lies at 5-10 (VVYADL). Residues 31–34 (CQCP) carry the LCK-binding motif motif. A helical; Signal-anchor for type II membrane protein transmembrane segment spans residues 46-66 (ACLILLVLSVIGLGVLVLTLL). The Extracellular segment spans residues 67–223 (QKPLIQNSPA…LKCECMCNGS (157 aa)). Residues 101-211 (HQDKCFHVSQ…CDSDNLWICQ (111 aa)) enclose the C-type lectin domain. 2 disulfides stabilise this stretch: Cys-122-Cys-210 and Cys-189-Cys-202.

As to quaternary structure, homodimer; disulfide-linked. Interacts with tyrosine kinase LCK. Binds PTPN6/SHP-1 in a phosphorylation-dependent manner. As to expression, expressed in a subset of natural killer cells.

It is found in the membrane. Functionally, receptor for CLEC2D/OCIL. Ligand-binding contributes to inhibition of cytotoxic natural killer (NK) cells. May mediate MHC class I-independent 'missing-self' recognition of allografts, tumor cells and virus-infected cells. The protein is Killer cell lectin-like receptor subfamily B member 1B allele B of Rattus norvegicus (Rat).